The sequence spans 219 residues: Proteasome subunit beta (219 aa).

Positions 1–14 are cleaved as a propeptide — removed in mature form; by autocatalysis; the sequence is MISNSEYHKEYMKG. The active-site Nucleophile is the Thr-15.

The protein belongs to the peptidase T1B family. The 20S proteasome core is composed of 14 alpha and 14 beta subunits that assemble into four stacked heptameric rings, resulting in a barrel-shaped structure. The two inner rings, each composed of seven catalytic beta subunits, are sandwiched by two outer rings, each composed of seven alpha subunits. The catalytic chamber with the active sites is on the inside of the barrel. Has a gated structure, the ends of the cylinder being occluded by the N-termini of the alpha-subunits. Is capped at one or both ends by the proteasome regulatory ATPase, PAN.

The protein resides in the cytoplasm. The catalysed reaction is Cleavage of peptide bonds with very broad specificity.. Its activity is regulated as follows. The formation of the proteasomal ATPase PAN-20S proteasome complex, via the docking of the C-termini of PAN into the intersubunit pockets in the alpha-rings, triggers opening of the gate for substrate entry. Interconversion between the open-gate and close-gate conformations leads to a dynamic regulation of the 20S proteasome proteolysis activity. Its function is as follows. Component of the proteasome core, a large protease complex with broad specificity involved in protein degradation. This chain is Proteasome subunit beta, found in Methanococcus maripaludis (strain C6 / ATCC BAA-1332).